A 1139-amino-acid chain; its full sequence is MFQRFKSAIDRTIAEEQARQQTATQSRSPSRTGSTSSRKGDGTPGQRVKSRKQASDAGDAPNPDPAVFEAAFVIDDSDEPSRAATPLPPNAADEKKSDNTNGQGNMPEDKTPEGQGANDEGSADKAQDGATDAPATKPQAPKLQEMSPEIRQKLRKLEKLEATYPELLRSYRVAHRRATAIEPFEKALRENTPLTSISDPEALVEYLNQVNLRSDMVMQELKKVSTDKDELQKKYNEAEEKAKKLEEELVAVRSASTDQPKTSDSETSKDAQDGKNGATSPEDPEKSKSPVSSVMGMFSPKHKPQKSLGEVAETKESNEEFFSYDDEIPQLQADVASKSEEIEKLKSEVEDLQKELTTARETSTGLVESLENATRELSKTRDVASVKDSLQAQLDDRNKEITSLNQRLEEVQKQLKQLEEDKNAHTAKVDELEVSLASSDKRTSELDAELAKASNAKNISKKLIDDLNNQIETLKNEKSDSQTKITDLTKKLESKPAPAMLTPAATPMPTVLQPAATSATAASGGGKKKNNKKKKGKGGVGGAVAPSQAPTAGDPVETPEPVITTDTAGNAELKAEIVKLKEEVAEKDTQIDRLSKRRKTEEDLREEIESLQENILMIGQDHVEAKDKIKELEAEKLELKTQITDLEKKISSSTSDAEASSKMQSEMESIKTEYSDLKEKTSTLQADLGAAQQLAQNRFKDLTELREVLQKAQPELKSLRQESATLKATKEELANKTKELRDMEKREKDLKRDVERAQKISSDRETEIKSLQEKLTVETNAKLRLEDAQRVSGRDLRRSEAEKVEISGRADKAEQELQSVQEELSKLRPKVKELEEQMHKLKREKAASQEEADFKTQQYSNAQGLLSSMRDQTAEMSVQLKESKSQAESLEEELAEVQRLLQERTREGETMRRLLADVDERADNKVRDMRARMEAAVEERDRIEDESATLARRKTRETEDLKQKLKDLEREVKTLTHERDELEQREKEWRKRREELESVEEKAEAETDELRTTASQLRTALDASEKQVRDVEKQRAELRRMLEESRQRYEKLSKDLKAAQTKLVASSSRSSFDSVRSGSNGSPAGAPDTVYLKTILLQFLEQKDTKLRAQLVPVLGKLLRFDKTDEQKWQKAVQHIEVK.

Disordered regions lie at residues 1–148 (MFQR…EMSP), 225–327 (STDK…YDDE), 356–388 (LTTA…SVKD), 475–569 (KNEK…DTAG), 648–674 (KKIS…KTEY), 720–767 (RQES…RETE), 786–828 (EDAQ…SKLR), 935–961 (AAVE…TEDL), and 977–1012 (HERD…ELRT). Positions 7-18 (SAIDRTIAEEQA) are enriched in basic and acidic residues. Positions 19–37 (RQQTATQSRSPSRTGSTSS) are enriched in low complexity. Coiled-coil stretches lie at residues 142 to 170 (KLQE…LLRS) and 215 to 259 (DMVM…STDQ). 4 stretches are compositionally biased toward basic and acidic residues: residues 225–247 (STDK…KLEE), 261–273 (KTSD…DAQD), 373–385 (ATRE…DVAS), and 475–494 (KNEK…KLES). Residues 323-495 (SYDDEIPQLQ…TDLTKKLESK (173 aa)) adopt a coiled-coil conformation. The segment covering 496-522 (PAPAMLTPAATPMPTVLQPAATSATAA) has biased composition (low complexity). Residues 526–537 (GKKKNNKKKKGK) show a composition bias toward basic residues. Positions 566–1067 (DTAGNAELKA…AAQTKLVASS (502 aa)) form a coiled coil. Over residues 651–661 (SSSTSDAEASS) the composition is skewed to low complexity. 4 stretches are compositionally biased toward basic and acidic residues: residues 728 to 767 (ATKE…RETE), 786 to 815 (EDAQ…KAEQ), 935 to 945 (AAVEERDRIED), and 977 to 1011 (HERD…DELR). The GRIP domain maps to 1082-1132 (SPAGAPDTVYLKTILLQFLEQKDTKLRAQLVPVLGKLLRFDKTDEQKWQKA).

The protein belongs to the ATG23 family. As to quaternary structure, forms a complex with ATG9 and ATG27.

It is found in the cytoplasm. It localises to the preautophagosomal structure membrane. Its function is as follows. Required for cytoplasm to vacuole transport (Cvt) vesicle formation and efficient autophagy. Plays a role in ATG protein retrieval from the pre-autophagosomal structure (PAS) and is especially required for autophagy-dependent cycling of ATG9. Autophagy is required for proper vegetative growth, asexual/sexual reproduction, and full virulence. Autophagy is particularly involved in the biosynthesis of deoxynivalenol (DON), an important virulence determinant. This is Autophagy-related protein 23 from Gibberella zeae (strain ATCC MYA-4620 / CBS 123657 / FGSC 9075 / NRRL 31084 / PH-1) (Wheat head blight fungus).